The chain runs to 444 residues: Methylenetetrahydrofolate--tRNA-(uracil-5-)-methyltransferase TrmFO (444 aa).

Gly-10–Gly-15 contacts FAD.

This sequence belongs to the MnmG family. TrmFO subfamily. The cofactor is FAD.

It localises to the cytoplasm. It catalyses the reaction uridine(54) in tRNA + (6R)-5,10-methylene-5,6,7,8-tetrahydrofolate + NADH + H(+) = 5-methyluridine(54) in tRNA + (6S)-5,6,7,8-tetrahydrofolate + NAD(+). It carries out the reaction uridine(54) in tRNA + (6R)-5,10-methylene-5,6,7,8-tetrahydrofolate + NADPH + H(+) = 5-methyluridine(54) in tRNA + (6S)-5,6,7,8-tetrahydrofolate + NADP(+). In terms of biological role, catalyzes the folate-dependent formation of 5-methyl-uridine at position 54 (M-5-U54) in all tRNAs. The polypeptide is Methylenetetrahydrofolate--tRNA-(uracil-5-)-methyltransferase TrmFO (Streptococcus suis (strain 98HAH33)).